Consider the following 392-residue polypeptide: Methylthioribose-1-phosphate isomerase (392 aa).

Asp267 serves as the catalytic Proton donor.

The protein belongs to the eIF-2B alpha/beta/delta subunits family. MtnA subfamily.

It localises to the cytoplasm. The protein resides in the nucleus. It catalyses the reaction 5-(methylsulfanyl)-alpha-D-ribose 1-phosphate = 5-(methylsulfanyl)-D-ribulose 1-phosphate. The protein operates within amino-acid biosynthesis; L-methionine biosynthesis via salvage pathway; L-methionine from S-methyl-5-thio-alpha-D-ribose 1-phosphate: step 1/6. In terms of biological role, catalyzes the interconversion of methylthioribose-1-phosphate (MTR-1-P) into methylthioribulose-1-phosphate (MTRu-1-P). The polypeptide is Methylthioribose-1-phosphate isomerase (Ajellomyces dermatitidis (strain ER-3 / ATCC MYA-2586) (Blastomyces dermatitidis)).